Here is a 280-residue protein sequence, read N- to C-terminus: Shikimate dehydrogenase (NADP(+)) (280 aa).

Residues 19–21 (SFS) and Thr-66 each bind shikimate. Lys-70 functions as the Proton acceptor in the catalytic mechanism. Position 82 (Glu-82) interacts with NADP(+). Residues Asn-91 and Asp-106 each contribute to the shikimate site. NADP(+) contacts are provided by residues 130–134 (GSGGA) and Leu-222. Tyr-224 is a shikimate binding site. An NADP(+)-binding site is contributed by Gly-245.

Belongs to the shikimate dehydrogenase family. Homodimer.

It carries out the reaction shikimate + NADP(+) = 3-dehydroshikimate + NADPH + H(+). Its pathway is metabolic intermediate biosynthesis; chorismate biosynthesis; chorismate from D-erythrose 4-phosphate and phosphoenolpyruvate: step 4/7. Involved in the biosynthesis of the chorismate, which leads to the biosynthesis of aromatic amino acids. Catalyzes the reversible NADPH linked reduction of 3-dehydroshikimate (DHSA) to yield shikimate (SA). This chain is Shikimate dehydrogenase (NADP(+)), found in Methanococcus maripaludis (strain C7 / ATCC BAA-1331).